A 150-amino-acid polypeptide reads, in one-letter code: Arginine repressor (150 aa).

This sequence belongs to the ArgR family.

The protein resides in the cytoplasm. It participates in amino-acid biosynthesis; L-arginine biosynthesis [regulation]. In terms of biological role, regulates arginine biosynthesis genes. In Staphylococcus carnosus (strain TM300), this protein is Arginine repressor.